The sequence spans 196 residues: Probable malonic semialdehyde reductase RutE (196 aa).

It belongs to the nitroreductase family. HadB/RutE subfamily. FMN serves as cofactor.

The catalysed reaction is 3-hydroxypropanoate + NADP(+) = 3-oxopropanoate + NADPH + H(+). Its function is as follows. May reduce toxic product malonic semialdehyde to 3-hydroxypropionic acid, which is excreted. In Escherichia coli (strain K12 / MC4100 / BW2952), this protein is Probable malonic semialdehyde reductase RutE.